Here is a 381-residue protein sequence, read N- to C-terminus: Ribosome assembly 1 protein (381 aa).

Met-1 bears the N-acetylmethionine mark. 3 disordered regions span residues 1–38, 164–216, and 350–381; these read MNYN…IKRQ, KDTF…DRDE, and FGSS…TRNK. The residue at position 172 (Ser-172) is a Phosphoserine. Residues 359-371 are compositionally biased toward basic residues; it reads NHYKPNYKNRKPN.

The protein resides in the nucleus. In terms of biological role, involved in a late nucleoplasmic step of 60S ribosomal subunit assembly. The protein is Ribosome assembly 1 protein (RSA1) of Saccharomyces cerevisiae (strain ATCC 204508 / S288c) (Baker's yeast).